The chain runs to 274 residues: MRFTKMNGLGNDFVIIDAVTQNIHLTSENIRYLSDRFYGVGFDQLLIVEPPYDPAIDFHCRIYNSDGTEVNQCGNGMRCVAQFVCLKKLTNKRNIHISTRANHIILSIMNDNRVSVNMGAPIFDPKLIPFYISQYQKTYILFLPTQIILCGVVSMGNPHCIILVEKIENIQVTSLGSALEDHHCFPERVNVSFMQIINCNNIRLRVYERGVGETQACGTAACAAVAVGIQQGLLYESVNVNLPGGTISVNWKGASNALYMTGSTSYVYDGYINL.

Substrate contacts are provided by asparagine 11, glutamine 44, and asparagine 64. The active-site Proton donor is the cysteine 73. Substrate is bound by residues 74 to 75, asparagine 157, asparagine 190, and 208 to 209; these read GN and ER. Cysteine 217 acts as the Proton acceptor in catalysis. Position 218–219 (218–219) interacts with substrate; sequence GT.

Belongs to the diaminopimelate epimerase family. Homodimer.

Its subcellular location is the cytoplasm. It catalyses the reaction (2S,6S)-2,6-diaminopimelate = meso-2,6-diaminopimelate. It functions in the pathway amino-acid biosynthesis; L-lysine biosynthesis via DAP pathway; DL-2,6-diaminopimelate from LL-2,6-diaminopimelate: step 1/1. In terms of biological role, catalyzes the stereoinversion of LL-2,6-diaminopimelate (L,L-DAP) to meso-diaminopimelate (meso-DAP), a precursor of L-lysine and an essential component of the bacterial peptidoglycan. The polypeptide is Diaminopimelate epimerase (Blochmanniella pennsylvanica (strain BPEN)).